A 201-amino-acid polypeptide reads, in one-letter code: Xanthine phosphoribosyltransferase (201 aa).

Positions 20 and 27 each coordinate xanthine. 129–133 (ANGQA) contacts 5-phospho-alpha-D-ribose 1-diphosphate. Lysine 157 lines the xanthine pocket.

It belongs to the purine/pyrimidine phosphoribosyltransferase family. Xpt subfamily. In terms of assembly, homodimer.

It is found in the cytoplasm. It catalyses the reaction XMP + diphosphate = xanthine + 5-phospho-alpha-D-ribose 1-diphosphate. It functions in the pathway purine metabolism; XMP biosynthesis via salvage pathway; XMP from xanthine: step 1/1. Converts the preformed base xanthine, a product of nucleic acid breakdown, to xanthosine 5'-monophosphate (XMP), so it can be reused for RNA or DNA synthesis. This chain is Xanthine phosphoribosyltransferase, found in Shouchella clausii (strain KSM-K16) (Alkalihalobacillus clausii).